The primary structure comprises 357 residues: Protein-glutamate methylesterase/protein-glutamine glutaminase 5 (357 aa).

Residues 10–127 (RVLVVDDSSF…IDAQKAFKEE (118 aa)) enclose the Response regulatory domain. Residue aspartate 61 is modified to 4-aspartylphosphate. Residues 161–357 (PRPAGQRYQY…IGTEITKIAG (197 aa)) form the CheB-type methylesterase domain. Active-site residues include serine 176, histidine 203, and aspartate 301.

It belongs to the CheB family. In terms of processing, phosphorylated by CheA. Phosphorylation of the N-terminal regulatory domain activates the methylesterase activity.

The protein localises to the cytoplasm. The catalysed reaction is [protein]-L-glutamate 5-O-methyl ester + H2O = L-glutamyl-[protein] + methanol + H(+). It catalyses the reaction L-glutaminyl-[protein] + H2O = L-glutamyl-[protein] + NH4(+). Functionally, involved in chemotaxis. Part of a chemotaxis signal transduction system that modulates chemotaxis in response to various stimuli. Catalyzes the demethylation of specific methylglutamate residues introduced into the chemoreceptors (methyl-accepting chemotaxis proteins or MCP) by CheR. Also mediates the irreversible deamidation of specific glutamine residues to glutamic acid. The protein is Protein-glutamate methylesterase/protein-glutamine glutaminase 5 of Geobacter metallireducens (strain ATCC 53774 / DSM 7210 / GS-15).